The following is a 679-amino-acid chain: DNA ligase (679 aa).

NAD(+) is bound by residues 43-47 (DYVYD), 92-93 (SM), and Glu124. Catalysis depends on Lys126, which acts as the N6-AMP-lysine intermediate. The NAD(+) site is built by Arg147, Glu181, Lys297, and Lys321. Zn(2+) contacts are provided by Cys415, Cys418, Cys433, and Cys438. The BRCT domain maps to 599–679 (TESAEWAGKR…RFDQAMKEEN (81 aa)).

It belongs to the NAD-dependent DNA ligase family. LigA subfamily. It depends on Mg(2+) as a cofactor. Requires Mn(2+) as cofactor.

The enzyme catalyses NAD(+) + (deoxyribonucleotide)n-3'-hydroxyl + 5'-phospho-(deoxyribonucleotide)m = (deoxyribonucleotide)n+m + AMP + beta-nicotinamide D-nucleotide.. DNA ligase that catalyzes the formation of phosphodiester linkages between 5'-phosphoryl and 3'-hydroxyl groups in double-stranded DNA using NAD as a coenzyme and as the energy source for the reaction. It is essential for DNA replication and repair of damaged DNA. The protein is DNA ligase of Limosilactobacillus fermentum (strain NBRC 3956 / LMG 18251) (Lactobacillus fermentum).